Consider the following 299-residue polypeptide: Ophiobolin family sesterterpenoid biosynthesis cluster acetyltransferase (299 aa).

Residues 1–20 (MYFFRALLSPVVLWPALVSG) form the signal peptide. N-linked (GlcNAc...) asparagine glycosylation is found at asparagine 28, asparagine 58, asparagine 77, asparagine 126, asparagine 177, asparagine 212, and asparagine 282.

The protein belongs to the bfoA family.

It functions in the pathway secondary metabolite biosynthesis; terpenoid biosynthesis. Acetyltransferase; part of the gene cluster that mediates the biosynthesis of an ophiobolin family sesterterpenoid. Functionally, sesterterpenoid synthase; part of the gene cluster that mediates the biosynthesis of an ophiobolin family sesterterpenoid. The sequence is that of Ophiobolin family sesterterpenoid biosynthesis cluster acetyltransferase from Aspergillus terreus.